The primary structure comprises 328 residues: tRNA uridine(34) hydroxylase (328 aa).

Positions 123–217 (SDPDVLLVDT…YLEEVPQEES (95 aa)) constitute a Rhodanese domain. The active-site Cysteine persulfide intermediate is Cys177.

This sequence belongs to the TrhO family.

It carries out the reaction uridine(34) in tRNA + AH2 + O2 = 5-hydroxyuridine(34) in tRNA + A + H2O. Functionally, catalyzes oxygen-dependent 5-hydroxyuridine (ho5U) modification at position 34 in tRNAs. This chain is tRNA uridine(34) hydroxylase, found in Psychromonas ingrahamii (strain DSM 17664 / CCUG 51855 / 37).